Reading from the N-terminus, the 72-residue chain is Translation initiation factor IF-1 (72 aa).

The region spanning 1–72 is the S1-like domain; the sequence is MAKEDSIEMQ…TKGRIVFRAR (72 aa).

This sequence belongs to the IF-1 family. Component of the 30S ribosomal translation pre-initiation complex which assembles on the 30S ribosome in the order IF-2 and IF-3, IF-1 and N-formylmethionyl-tRNA(fMet); mRNA recruitment can occur at any time during PIC assembly.

Its subcellular location is the cytoplasm. In terms of biological role, one of the essential components for the initiation of protein synthesis. Stabilizes the binding of IF-2 and IF-3 on the 30S subunit to which N-formylmethionyl-tRNA(fMet) subsequently binds. Helps modulate mRNA selection, yielding the 30S pre-initiation complex (PIC). Upon addition of the 50S ribosomal subunit IF-1, IF-2 and IF-3 are released leaving the mature 70S translation initiation complex. The polypeptide is Translation initiation factor IF-1 (Shewanella amazonensis (strain ATCC BAA-1098 / SB2B)).